Consider the following 442-residue polypeptide: Probable glycine dehydrogenase (decarboxylating) subunit 1 (442 aa).

Belongs to the GcvP family. N-terminal subunit subfamily. As to quaternary structure, the glycine cleavage system is composed of four proteins: P, T, L and H. In this organism, the P 'protein' is a heterodimer of two subunits.

It catalyses the reaction N(6)-[(R)-lipoyl]-L-lysyl-[glycine-cleavage complex H protein] + glycine + H(+) = N(6)-[(R)-S(8)-aminomethyldihydrolipoyl]-L-lysyl-[glycine-cleavage complex H protein] + CO2. The glycine cleavage system catalyzes the degradation of glycine. The P protein binds the alpha-amino group of glycine through its pyridoxal phosphate cofactor; CO(2) is released and the remaining methylamine moiety is then transferred to the lipoamide cofactor of the H protein. The sequence is that of Probable glycine dehydrogenase (decarboxylating) subunit 1 from Phenylobacterium zucineum (strain HLK1).